An 809-amino-acid chain; its full sequence is Origin of replication complex subunit 1A (809 aa).

Residues 1 to 47 (MASSLSSKAKTFKSPTKTPTKMYRKSYLSPSSTSLTPPQTPETLTPL) are compositionally biased toward low complexity. Residues 1–69 (MASSLSSKAK…LGNDPIDLPG (69 aa)) are disordered. Residues 160-185 (DPEIEDCQICFKSHTNTIMIECDDCL) form a histone H3 binding region. Residues 163-213 (IEDCQICFKSHTNTIMIECDDCLGGFHLNCLKPPLKEVPEGDWICQFCEVK) form a PHD-type zinc finger. Residues Cys-166, Cys-169, Cys-181, Cys-184, His-189, and Cys-192 each contribute to the Zn(2+) site. A histone H3 binding region spans residues 201–205 (PEGDW). Zn(2+) contacts are provided by Cys-207 and Cys-210. In terms of domain architecture, BAH spans 223-341 (PKPPEGKKLA…VHWGSFKRVA (119 aa)). Residues 316–321 (ASNDGD) are histone H3 binding. Residues 431–799 (PKSLPCRSKE…DDVAFALKDN (369 aa)) are necessary and sufficient for ORC complex assembly. Residues 466-473 (GVPGTGKT) and 466-474 (GVPGTGKTI) each bind ATP. Positions 556 and 557 each coordinate Mg(2+). Positions 557, 590, and 655 each coordinate ATP.

The protein belongs to the ORC1 family. As to quaternary structure, component of the origin recognition complex (ORC) composed of at least ORC1 (ORC1A or ORC1B), ORC2, ORC3, ORC4, ORC5 and ORC6. ORC is regulated in a cell-cycle and development dependent manner. It is sequentially assembled at the exit from anaphase of mitosis and disassembled as cells enter S phase. Interacts directly with ORC2, ORC3, ORC4 and ORC5. Binds mostly unmodified histone H3, and, with lower efficiency, H3K4me1 H3K4me2 and H3K4me3. As to expression, follow a cell-cycle regulation with a peak at the G1/S-phase. Mostly expressed in siliques, flowers and flower buds, and, to a lower extent, in roots, leaves and stems.

The protein resides in the nucleus. Functionally, essential protein. Component of the origin recognition complex (ORC) that binds origins of replication. It has a role in both chromosomal replication and mating type transcriptional silencing. Binds to the ARS consensus sequence (ACS) of origins of replication. H3K4me3 effector that positively regulates the transcription of a subset of genes. The chain is Origin of replication complex subunit 1A from Arabidopsis thaliana (Mouse-ear cress).